Here is a 549-residue protein sequence, read N- to C-terminus: Dihydroxy-acid dehydratase (549 aa).

Mg(2+) is bound at residue aspartate 78. Cysteine 119 provides a ligand contact to [2Fe-2S] cluster. 2 residues coordinate Mg(2+): aspartate 120 and lysine 121. Position 121 is an N6-carboxylysine (lysine 121). Cysteine 191 contributes to the [2Fe-2S] cluster binding site. Glutamate 441 serves as a coordination point for Mg(2+). Catalysis depends on serine 466, which acts as the Proton acceptor.

This sequence belongs to the IlvD/Edd family. Homodimer. Requires [2Fe-2S] cluster as cofactor. Mg(2+) is required as a cofactor.

The catalysed reaction is (2R)-2,3-dihydroxy-3-methylbutanoate = 3-methyl-2-oxobutanoate + H2O. The enzyme catalyses (2R,3R)-2,3-dihydroxy-3-methylpentanoate = (S)-3-methyl-2-oxopentanoate + H2O. It functions in the pathway amino-acid biosynthesis; L-isoleucine biosynthesis; L-isoleucine from 2-oxobutanoate: step 3/4. It participates in amino-acid biosynthesis; L-valine biosynthesis; L-valine from pyruvate: step 3/4. In terms of biological role, functions in the biosynthesis of branched-chain amino acids. Catalyzes the dehydration of (2R,3R)-2,3-dihydroxy-3-methylpentanoate (2,3-dihydroxy-3-methylvalerate) into 2-oxo-3-methylpentanoate (2-oxo-3-methylvalerate) and of (2R)-2,3-dihydroxy-3-methylbutanoate (2,3-dihydroxyisovalerate) into 2-oxo-3-methylbutanoate (2-oxoisovalerate), the penultimate precursor to L-isoleucine and L-valine, respectively. The protein is Dihydroxy-acid dehydratase of Methanobrevibacter smithii (strain ATCC 35061 / DSM 861 / OCM 144 / PS).